The sequence spans 1162 residues: Transcription termination factor 2 (1162 aa).

Residues C6, H9, C32, and C37 each contribute to the Zn(2+) site. The GRF-type zinc-finger motif lies at 6–46 (CPEHGTFCFLKTGVRDGPNKGKSFYVCRADTCSFVRATDIP). Disordered regions lie at residues 97–116 (PDSK…ETFH), 142–358 (IKGE…EEDD), 388–407 (DRSV…KVEP), and 459–503 (LSPE…TQPV). Polar residues predominate over residues 105–116 (SNKSQHASETFH). A compositionally biased stretch (basic and acidic residues) spans 142–178 (IKGEGEEKKADKKQREKGDQLFDQKKEQKPEMMEKDL). K143 participates in a covalent cross-link: Glycyl lysine isopeptide (Lys-Gly) (interchain with G-Cter in SUMO2). Positions 219–232 (IKSQQCQGNELTRP) are enriched in polar residues. Residues 233–245 (SASSQEKSSGKSQ) are compositionally biased toward low complexity. The span at 246-258 (DVQRESEPLREKV) shows a compositional bias: basic and acidic residues. The span at 261 to 274 (LLPQNVHSHNSISK) shows a compositional bias: polar residues. Residues 323–338 (PAPGGPAAQAAPAAPG) are compositionally biased toward low complexity. Polar residues predominate over residues 459-485 (LSPEQGTNEKSNSQVPQQSHFTKTTTG). S460 bears the Phosphoserine mark. Positions 583–786 (WRESQKPQGG…YSLLKFLRCS (204 aa)) constitute a Helicase ATP-binding domain. 596 to 603 (DDMGLGKT) provides a ligand contact to ATP. A DEAH box motif is present at residues 737-740 (DEAH). The interval 871 to 890 (KRHESRGNQSGRSPNNPFSR) is disordered. Over residues 877–888 (GNQSGRSPNNPF) the composition is skewed to polar residues. Phosphoserine is present on residues S883 and S908. The Helicase C-terminal domain occupies 995-1157 (SLLAELEAIQ…VTKLTLADLR (163 aa)).

It belongs to the SNF2/RAD54 helicase family. As to quaternary structure, interacts with CDC5L. Part of the spliceosome.

It is found in the cytoplasm. Its subcellular location is the nucleus. DsDNA-dependent ATPase which acts as a transcription termination factor by coupling ATP hydrolysis with removal of RNA polymerase II from the DNA template. May contribute to mitotic transcription repression. May also be involved in pre-mRNA splicing. The protein is Transcription termination factor 2 (TTF2) of Homo sapiens (Human).